Reading from the N-terminus, the 712-residue chain is TIR domain-containing adapter molecule 1 (712 aa).

Residues 1 to 153 (MACTGPSLPS…CGWDIAGDPG (153 aa)) are TRIF-NTD. A TRAF6-binding motif is present at residues 84–91 (EDPEEPPD). The pLxIS motif signature appears at 207-210 (LEIS). Position 210 is a phosphoserine; by TBK1 (serine 210). Disordered regions lie at residues 216 to 316 (PFLS…SLPL) and 336 to 384 (LSVE…LFPS). Residue lysine 229 forms a Glycyl lysine isopeptide (Lys-Gly) (interchain with G-Cter in ubiquitin) linkage. The TRAF6-binding signature appears at 248 to 255 (QEPEEMSW). Over residues 265–275 (PELPSSPPPGL) the composition is skewed to pro residues. The TRAF6-binding motif lies at 299-309 (NYPVECTEGSA). Residues 347-369 (KPCPPTPTTPETSPPPPPPPPSS) are compositionally biased toward pro residues. Residues 393-553 (KFYNFVILHA…QDTRALREQS (161 aa)) enclose the TIR domain. Residues 512–712 (RLDEHSQIFA…APEDKTQEAE (201 aa)) are sufficient to induce apoptosis. 2 stretches are compositionally biased toward pro residues: residues 620–633 (PFPT…PPPL) and 640–649 (TPPPPSPQPA). The tract at residues 620-677 (PFPTWPGCPQPPPLHAWQAGTPPPPSPQPAAFPQSLPFPQSPAFPTASPAPPQSPGLQ) is disordered. The segment covering 650 to 666 (AFPQSLPFPQSPAFPTA) has biased composition (low complexity).

Homodimer. Found in a multi-helicase-TICAM1 complex at least composed of DHX36, DDX1, DDX21 and TICAM1; this complex exists in resting cells with or without poly(I:C) RNA ligand stimulation. Interacts (via TIR domain) with DDX21 (via C-terminus). Interacts (via TIR domain) with DHX36 (via C-terminus). Interacts with AZI2 and IRF7. Interacts with TICAM2 in TLR4 recruitment. Interaction with PIAS4 inhibits the TICAM1-induced NF-kappa-B, IRF and IFNB1 activation. Interacts with IKBKB and IKBKE. Interaction with SARM1 blocks TICAM1-dependent transcription factor activation. Interacts with TRAF3. Interacts (when phosphorylated) with IRF3; following activation and phosphorylation on the pLxIS motif by TBK1, recruits IRF3. Interacts with TBK1, TRAF6 and RIPK1 and these interactions are enhanced in the presence of WDFY1. Interacts with TRAFD1. Interacts with UBQLN1 (via UBA domain). Interacts with TLR4. Interacts with WDFY1 in response to poly(I:C). Interacts (via the TIR domain) with TLR3 in response to poly(I:C) and this interaction is enhanced in the presence of WDFY1. Interacts with TRIM56. Component of a multi-helicase-TICAM1 complex that acts as a cytoplasmic sensor of viral double-stranded RNA (dsRNA) and plays a role in the activation of a cascade of antiviral responses including the induction of pro-inflammatory cytokines. Interacts (via the TIR domain) with TLR5. Interacts with TRIM8. Interacts with TAX1BP1 and TRIM32; these interactions target TICAM1 to TAX1BP1-mediated selective autophagic degradation. Interacts with DDX50. As to quaternary structure, (Microbial infection) Interacts with hepatitis C virus (HCV) NS3/4A protease; this interaction leads to TICAM1 cleavage, thereby disrupting TLR3 signaling and preventing the establishment of an antiviral state. In terms of assembly, (Microbial infection) Interacts with Seneca Valley virus protease 3C; this interaction allows the cleavage of TICAM1/TRIF and subsequent suppression of host innate immunity. (Microbial infection) Interacts (via C-terminus) with coxsackievirus B3 (CVB3) protease 3C. Post-translationally, phosphorylated by TBK1. Following activation, phosphorylated by TBK1 at Ser-210 in the pLxIS motif. The phosphorylated pLxIS motif constitutes an IRF3-binding motif, leading to recruitment of the transcription factor IRF3 to induce type-I interferons and other cytokines. In terms of processing, polyubiquitinated at Lys-229 by TRIM38 with 'Lys-48'-linked chains, leading to proteasomal degradation. Polyubiquitinated with 'Lys-6'- and 'Lys-33'-linked chains in a TRIM8-dependent manner; ubiquitination disrupts the interaction with TBK1 and subsequent interferon production. (Microbial infection) Cleaved and degraded by hepatitis A virus (HAV) protein 3CD allowing the virus to disrupt host TLR3 signaling. Post-translationally, (Microbial infection) Cleaved by CVB3 protease 3C allowing the virus to disrupt host TLR3 signaling. In terms of processing, (Microbial infection) Cleaved by Seneca Valley virus protease 3C allowing the virus to disrupt host TLR3 signaling. (Microbial infection) Cleaved by protease 3C of human enterovirus D68 (EV68) allowing the virus to disrupt host TLR3 signaling. Post-translationally, (Microbial infection) Cleaved by HCV protease NS3/4A, thereby disrupting TLR3 signaling and preventing the establishment of an antiviral state. Ubiquitously expressed but with higher levels in liver.

The protein resides in the cytoplasmic vesicle. It is found in the autophagosome. It localises to the cytoplasm. Its subcellular location is the cytosol. The protein localises to the mitochondrion. Its function is as follows. Involved in innate immunity against invading pathogens. Adapter used by TLR3, TLR4 (through TICAM2) and TLR5 to mediate NF-kappa-B and interferon-regulatory factor (IRF) activation, and to induce apoptosis. Ligand binding to these receptors results in TRIF recruitment through its TIR domain. Distinct protein-interaction motifs allow recruitment of the effector proteins TBK1, TRAF6 and RIPK1, which in turn, lead to the activation of transcription factors IRF3 and IRF7, NF-kappa-B and FADD respectively. Phosphorylation by TBK1 on the pLxIS motif leads to recruitment and subsequent activation of the transcription factor IRF3 to induce expression of type I interferon and exert a potent immunity against invading pathogens. Component of a multi-helicase-TICAM1 complex that acts as a cytoplasmic sensor of viral double-stranded RNA (dsRNA) and plays a role in the activation of a cascade of antiviral responses including the induction of pro-inflammatory cytokines. The polypeptide is TIR domain-containing adapter molecule 1 (TICAM1) (Homo sapiens (Human)).